An 81-amino-acid polypeptide reads, in one-letter code: Putative membrane protein insertion efficiency factor (81 aa).

A disordered region spans residues 61 to 81 (NDGGYDPVPPAPSSRTSSIAE).

This sequence belongs to the UPF0161 family.

Its subcellular location is the cell inner membrane. Could be involved in insertion of integral membrane proteins into the membrane. The protein is Putative membrane protein insertion efficiency factor of Pseudomonas putida (strain ATCC 47054 / DSM 6125 / CFBP 8728 / NCIMB 11950 / KT2440).